Here is a 642-residue protein sequence, read N- to C-terminus: Threonine--tRNA ligase (642 aa).

Positions 1 to 61 constitute a TGS domain; the sequence is MPVITLPDGS…ESDAQLAIIT (61 aa). Residues 243–534 form a catalytic region; that stretch reads DHRKIGKQLD…LTEEYAGFFP (292 aa). C334, H385, and H511 together coordinate Zn(2+).

Belongs to the class-II aminoacyl-tRNA synthetase family. As to quaternary structure, homodimer. It depends on Zn(2+) as a cofactor.

It localises to the cytoplasm. It catalyses the reaction tRNA(Thr) + L-threonine + ATP = L-threonyl-tRNA(Thr) + AMP + diphosphate + H(+). In terms of biological role, catalyzes the attachment of threonine to tRNA(Thr) in a two-step reaction: L-threonine is first activated by ATP to form Thr-AMP and then transferred to the acceptor end of tRNA(Thr). Also edits incorrectly charged L-seryl-tRNA(Thr). The chain is Threonine--tRNA ligase from Yersinia pseudotuberculosis serotype O:1b (strain IP 31758).